We begin with the raw amino-acid sequence, 369 residues long: Tetraacyldisaccharide 4'-kinase (369 aa).

An ATP-binding site is contributed by 68–75 (VVGGTGKT).

Belongs to the LpxK family.

The enzyme catalyses a lipid A disaccharide + ATP = a lipid IVA + ADP + H(+). Its pathway is glycolipid biosynthesis; lipid IV(A) biosynthesis; lipid IV(A) from (3R)-3-hydroxytetradecanoyl-[acyl-carrier-protein] and UDP-N-acetyl-alpha-D-glucosamine: step 6/6. Its function is as follows. Transfers the gamma-phosphate of ATP to the 4'-position of a tetraacyldisaccharide 1-phosphate intermediate (termed DS-1-P) to form tetraacyldisaccharide 1,4'-bis-phosphate (lipid IVA). The sequence is that of Tetraacyldisaccharide 4'-kinase from Chlamydia trachomatis serovar D (strain ATCC VR-885 / DSM 19411 / UW-3/Cx).